We begin with the raw amino-acid sequence, 729 residues long: Zorya protein ZorA (729 aa).

The next 3 membrane-spanning stretches (helical) occupy residues 20–40 (PATV…FYFF), 135–155 (LPGI…MIGL), and 177–197 (VLYA…ITWL).

It belongs to the MotA family.

The protein localises to the cell inner membrane. Component of antiviral defense system Zorya type I, composed of ZorA, ZorB, ZorC and ZorD. Expression of Zorya type I in E.coli (strain MG1655) confers 10,000-fold resistance to phage SECphi27, 100-fold resistance to lambda, and 10-fold resistance to T7. While most T7 infected Zorya-containing cells undergo abortive infection, a minority produce viable phage progeny. These eventually accumulate to a high multiplicity of infection, leading to culture collapse by 2 hours after initial infection. ZorA and ZorB probably assemble in the cell inner membrane and exert their effect there. The sequence is that of Zorya protein ZorA from Escherichia coli O139:H28 (strain E24377A / ETEC).